The following is an 86-amino-acid chain: UPF0367 protein NATL1_01981 (86 aa).

This sequence belongs to the UPF0367 family.

In Prochlorococcus marinus (strain NATL1A), this protein is UPF0367 protein NATL1_01981.